Reading from the N-terminus, the 466-residue chain is Glutamate--tRNA ligase 1 (466 aa).

The 'HIGH' region signature appears at 9–19 (PSPTGLLHIGN). A 'KMSKS' region motif is present at residues 238–242 (KLSKR). ATP is bound at residue K241.

Belongs to the class-I aminoacyl-tRNA synthetase family. Glutamate--tRNA ligase type 1 subfamily. As to quaternary structure, monomer.

It localises to the cytoplasm. The catalysed reaction is tRNA(Glu) + L-glutamate + ATP = L-glutamyl-tRNA(Glu) + AMP + diphosphate. Functionally, catalyzes the attachment of glutamate to tRNA(Glu) in a two-step reaction: glutamate is first activated by ATP to form Glu-AMP and then transferred to the acceptor end of tRNA(Glu). In Gluconacetobacter diazotrophicus (strain ATCC 49037 / DSM 5601 / CCUG 37298 / CIP 103539 / LMG 7603 / PAl5), this protein is Glutamate--tRNA ligase 1.